A 295-amino-acid chain; its full sequence is Nucleotide-binding protein EF_0766 (295 aa).

Gly12–Thr19 serves as a coordination point for ATP. Asp62–Ser65 lines the GTP pocket.

The protein belongs to the RapZ-like family.

Displays ATPase and GTPase activities. In Enterococcus faecalis (strain ATCC 700802 / V583), this protein is Nucleotide-binding protein EF_0766.